A 631-amino-acid chain; its full sequence is MPTTHDWINNPLGVVDGLFAQSNSSPDWEKKVVEYFKEKLKLNDAHTWVPSLNDVPLHYLKPNSLVKFRCMVQDMFDPEFFMGVYEMNDPTSNSKQVKCGKYKDVTECGQVDFNSRNTVTSERQTFYCVPIPGESNWVKESYAGTSQARVVPSTSYVPNRHKRSYEEDDEMDTQCQQTKDISQGAQSSSESHGNTEPKRQETEAPSQDSSSSHCTSSLDLNFPLPGEKGPACLVKVYEDWDSFKLNDMLEVFGILSVDPALSVIADEREASSLLDPTEGMETMEEQRVHSPPASLVPRLHMLYAQPLAHNNPLLPSSPLENNADYLSCVLGELASVRAELLTFFTHILMGDSLAAEFLILHLISNVYSRRDVLPLGKFTLNLSGCPLSSPFTEHLFKVIQQLVPSSYRLSMSLHNMNTQRMVPRKDYTANRLVSGTLQLAKNTSLFLDETQLEQGQLDSTGVRNITALGNLISWQKVDYDFNYHQMEFPCNINVLIASEGRSLLPSDCQVHLRASLNPPNLEEYLSAVQVAQVPSQLNKYRVYLSVARALNYTISDEITKAVEEDFVDMRKDDPQSMSAEDLHRLLVVARLLSLSHGQNTLSRDGWMKAKQLEALRISRTQQQKCVNGNEP.

2 stretches are compositionally biased toward polar residues: residues 148 to 157 (ARVVPSTSYV) and 173 to 192 (TQCQQTKDISQGAQSSSESH). The segment at 148-218 (ARVVPSTSYV…SSSSHCTSSL (71 aa)) is disordered. Over residues 193 to 202 (GNTEPKRQET) the composition is skewed to basic and acidic residues. Residues 206-217 (SQDSSSSHCTSS) show a composition bias toward low complexity.

Belongs to the MCMBP family. In terms of assembly, interacts with the mcm complex: associates with the mcm3-7 complex which lacks mcm2, while it does not interact with the mcm complex when mcm2 is present (mcm2-7 complex).

It is found in the nucleus. In terms of biological role, associated component of the mcm complex that acts as a regulator of DNA replication. Binds to the MCM complex during late S phase and promotes the disassembly of the mcm complex from chromatin, thereby acting as a key regulator of pre-replication complex (pre-RC) unloading from replicated DNA. Can dissociate the mcm complex without addition of ATP; probably acts by destabilizing interactions of each individual subunits of the mcm complex. Required for sister chromatid cohesion. The protein is Mini-chromosome maintenance complex-binding protein (mcmbp) of Danio rerio (Zebrafish).